Consider the following 519-residue polypeptide: 2-isopropylmalate synthase (519 aa).

In terms of domain architecture, Pyruvate carboxyltransferase spans 5-267 (VKIFDTTLRD…NTNIRSHEIS (263 aa)). Residues Asp14, His202, His204, and Asn238 each coordinate Mn(2+). Residues 392-519 (KLLYLQASSG…KKQQTQTAGV (128 aa)) form a regulatory domain region.

The protein belongs to the alpha-IPM synthase/homocitrate synthase family. LeuA type 1 subfamily. Homodimer. The cofactor is Mn(2+).

It is found in the cytoplasm. It carries out the reaction 3-methyl-2-oxobutanoate + acetyl-CoA + H2O = (2S)-2-isopropylmalate + CoA + H(+). Its pathway is amino-acid biosynthesis; L-leucine biosynthesis; L-leucine from 3-methyl-2-oxobutanoate: step 1/4. In terms of biological role, catalyzes the condensation of the acetyl group of acetyl-CoA with 3-methyl-2-oxobutanoate (2-ketoisovalerate) to form 3-carboxy-3-hydroxy-4-methylpentanoate (2-isopropylmalate). The sequence is that of 2-isopropylmalate synthase from Pseudoalteromonas atlantica (strain T6c / ATCC BAA-1087).